Consider the following 148-residue polypeptide: Dermatopontin (148 aa).

Cysteine 14 and cysteine 40 are joined by a disulfide. The N-linked (GlcNAc...) asparagine glycan is linked to asparagine 44. Cystine bridges form between cysteine 66/cysteine 93 and cysteine 103/cysteine 147.

This sequence belongs to the dermatopontin family. Post-translationally, the terminal mannose residues of the polysaccharide are 3-O-methylated. No tyrosine sulfation was detected.

It is found in the secreted. It localises to the extracellular space. The protein localises to the extracellular matrix. In terms of biological role, seems to mediate adhesion by cell surface integrin binding. This chain is Dermatopontin, found in Biomphalaria glabrata (Bloodfluke planorb).